Consider the following 417-residue polypeptide: Riboflavin biosynthesis protein RibBA (417 aa).

The interval 1 to 204 is DHBP synthase; it reads MTRFDSIERA…IADLIAWRRK (204 aa). D-ribulose 5-phosphate is bound by residues 28–29, aspartate 33, 141–145, and glutamate 165; these read RE and RPGHT. Glutamate 29 contributes to the Mg(2+) binding site. Histidine 144 is a binding site for Mg(2+). Residues 205–417 form a GTP cyclohydrolase II region; the sequence is HEKHVERVAS…LDDFEAGEML (213 aa). 259–263 contacts GTP; the sequence is RVHSE. Cysteine 264, cysteine 275, and cysteine 277 together coordinate Zn(2+). Residues glutamine 280, 303 to 305, and threonine 325 each bind GTP; that span reads EGR. Residue aspartate 337 is the Proton acceptor; for GTP cyclohydrolase activity of the active site. The active-site Nucleophile; for GTP cyclohydrolase activity is arginine 339. Residues threonine 360 and lysine 365 each contribute to the GTP site.

This sequence in the N-terminal section; belongs to the DHBP synthase family. The protein in the C-terminal section; belongs to the GTP cyclohydrolase II family. Mg(2+) is required as a cofactor. The cofactor is Mn(2+). Requires Zn(2+) as cofactor.

It carries out the reaction D-ribulose 5-phosphate = (2S)-2-hydroxy-3-oxobutyl phosphate + formate + H(+). The catalysed reaction is GTP + 4 H2O = 2,5-diamino-6-hydroxy-4-(5-phosphoribosylamino)-pyrimidine + formate + 2 phosphate + 3 H(+). Its pathway is cofactor biosynthesis; riboflavin biosynthesis; 2-hydroxy-3-oxobutyl phosphate from D-ribulose 5-phosphate: step 1/1. It functions in the pathway cofactor biosynthesis; riboflavin biosynthesis; 5-amino-6-(D-ribitylamino)uracil from GTP: step 1/4. Functionally, catalyzes the conversion of D-ribulose 5-phosphate to formate and 3,4-dihydroxy-2-butanone 4-phosphate. In terms of biological role, catalyzes the conversion of GTP to 2,5-diamino-6-ribosylamino-4(3H)-pyrimidinone 5'-phosphate (DARP), formate and pyrophosphate. The chain is Riboflavin biosynthesis protein RibBA from Rhodococcus jostii (strain RHA1).